Reading from the N-terminus, the 467-residue chain is Argininosuccinate lyase (467 aa).

This sequence belongs to the lyase 1 family. Argininosuccinate lyase subfamily.

It localises to the cytoplasm. It catalyses the reaction 2-(N(omega)-L-arginino)succinate = fumarate + L-arginine. Its pathway is amino-acid biosynthesis; L-arginine biosynthesis; L-arginine from L-ornithine and carbamoyl phosphate: step 3/3. The chain is Argininosuccinate lyase from Chromohalobacter salexigens (strain ATCC BAA-138 / DSM 3043 / CIP 106854 / NCIMB 13768 / 1H11).